The following is a 185-amino-acid chain: Large ribosomal subunit protein uL5 (185 aa).

This sequence belongs to the universal ribosomal protein uL5 family. Part of the 50S ribosomal subunit; part of the 5S rRNA/L5/L18/L25 subcomplex. Contacts the 5S rRNA and the P site tRNA. Forms a bridge to the 30S subunit in the 70S ribosome.

Functionally, this is one of the proteins that bind and probably mediate the attachment of the 5S RNA into the large ribosomal subunit, where it forms part of the central protuberance. In the 70S ribosome it contacts protein S13 of the 30S subunit (bridge B1b), connecting the 2 subunits; this bridge is implicated in subunit movement. Contacts the P site tRNA; the 5S rRNA and some of its associated proteins might help stabilize positioning of ribosome-bound tRNAs. The polypeptide is Large ribosomal subunit protein uL5 (Rhizobium etli (strain ATCC 51251 / DSM 11541 / JCM 21823 / NBRC 15573 / CFN 42)).